The chain runs to 84 residues: Translational regulator CsrA (84 aa).

Belongs to the CsrA/RsmA family. As to quaternary structure, homodimer; the beta-strands of each monomer intercalate to form a hydrophobic core, while the alpha-helices form wings that extend away from the core.

It is found in the cytoplasm. A translational regulator that binds mRNA to regulate translation initiation and/or mRNA stability. Usually binds in the 5'-UTR at or near the Shine-Dalgarno sequence preventing ribosome-binding, thus repressing translation. Its main target seems to be the major flagellin gene, while its function is anatagonized by FliW. The polypeptide is Translational regulator CsrA (Leptospira borgpetersenii serovar Hardjo-bovis (strain JB197)).